Reading from the N-terminus, the 852-residue chain is Protein mono-ADP-ribosyltransferase PARP8 (852 aa).

Disordered regions lie at residues 113–134 (NGEE…NDSE) and 289–310 (SPSY…EQDG). A compositionally biased stretch (acidic residues) spans 123 to 134 (VEEDSEGDNDSE). Residues cysteine 332, cysteine 366, cysteine 375, and cysteine 394 each carry the ADP-ribosylcysteine modification. Residues 615 to 842 (EMTQAPYLEI…QEGGIHKEIL (228 aa)) enclose the PARP catalytic domain. Positions 748-775 (QKVSSKDEPASSSKSSNASQSQKKGQQS) are disordered. Low complexity predominate over residues 757–775 (ASSSKSSNASQSQKKGQQS).

The protein belongs to the ARTD/PARP family. In terms of processing, auto-mono-ADP-ribosylated.

The enzyme catalyses L-cysteinyl-[protein] + NAD(+) = S-(ADP-D-ribosyl)-L-cysteinyl-[protein] + nicotinamide + H(+). Its function is as follows. Mono-ADP-ribosyltransferase that mediates mono-ADP-ribosylation of target proteins. In Mus musculus (Mouse), this protein is Protein mono-ADP-ribosyltransferase PARP8.